The chain runs to 153 residues: D-aminoacyl-tRNA deacylase (153 aa).

The short motif at 142 to 143 (GP) is the Gly-cisPro motif, important for rejection of L-amino acids element.

It belongs to the DTD family. In terms of assembly, homodimer.

It is found in the cytoplasm. The catalysed reaction is glycyl-tRNA(Ala) + H2O = tRNA(Ala) + glycine + H(+). It catalyses the reaction a D-aminoacyl-tRNA + H2O = a tRNA + a D-alpha-amino acid + H(+). An aminoacyl-tRNA editing enzyme that deacylates mischarged D-aminoacyl-tRNAs. Also deacylates mischarged glycyl-tRNA(Ala), protecting cells against glycine mischarging by AlaRS. Acts via tRNA-based rather than protein-based catalysis; rejects L-amino acids rather than detecting D-amino acids in the active site. By recycling D-aminoacyl-tRNA to D-amino acids and free tRNA molecules, this enzyme counteracts the toxicity associated with the formation of D-aminoacyl-tRNA entities in vivo and helps enforce protein L-homochirality. The sequence is that of D-aminoacyl-tRNA deacylase from Acidovorax ebreus (strain TPSY) (Diaphorobacter sp. (strain TPSY)).